We begin with the raw amino-acid sequence, 526 residues long: ATP synthase subunit alpha (526 aa).

ATP is bound at residue 171 to 178; that stretch reads GDRQTGKT.

The protein belongs to the ATPase alpha/beta chains family. F-type ATPases have 2 components, CF(1) - the catalytic core - and CF(0) - the membrane proton channel. CF(1) has five subunits: alpha(3), beta(3), gamma(1), delta(1), epsilon(1). CF(0) has four main subunits: a, b, b' and c.

Its subcellular location is the cell inner membrane. It catalyses the reaction ATP + H2O + 4 H(+)(in) = ADP + phosphate + 5 H(+)(out). Functionally, produces ATP from ADP in the presence of a proton gradient across the membrane. The alpha chain is a regulatory subunit. This chain is ATP synthase subunit alpha, found in Chlorobium limicola (strain DSM 245 / NBRC 103803 / 6330).